A 408-amino-acid polypeptide reads, in one-letter code: Peptidase T (408 aa).

H78 contributes to the Zn(2+) binding site. D80 is a catalytic residue. Residue D140 coordinates Zn(2+). E173 acts as the Proton acceptor in catalysis. Zn(2+) is bound by residues E174, D196, and H379.

It belongs to the peptidase M20B family. Zn(2+) serves as cofactor.

It localises to the cytoplasm. It carries out the reaction Release of the N-terminal residue from a tripeptide.. Functionally, cleaves the N-terminal amino acid of tripeptides. The sequence is that of Peptidase T from Escherichia coli O9:H4 (strain HS).